The following is a 266-amino-acid chain: Respiratory nitrate reductase beta chain (266 aa).

4Fe-4S ferredoxin-type domains lie at 3 to 32 and 30 to 61; these read VGMV…AWFN and WFNN…KREE. Positions 12, 15, 18, 22, 39, 42, and 47 each coordinate [4Fe-4S] cluster. [3Fe-4S] cluster-binding residues include cysteine 51 and cysteine 73. [4Fe-4S] cluster contacts are provided by cysteine 77, cysteine 81, cysteine 84, cysteine 96, and cysteine 100.

As to quaternary structure, heterotrimer composed of an alpha, a beta and a gamma chain. Alpha and beta are catalytic chains; gamma chains are involved in binding the enzyme complex to the cytoplasmic membrane. It depends on [4Fe-4S] cluster as a cofactor. [3Fe-4S] cluster is required as a cofactor.

The protein localises to the cell membrane. It localises to the cytoplasm. The enzyme catalyses nitrate + a quinol = a quinone + nitrite + H2O. With respect to regulation, inhibited by micromolar concentrations of azide. In terms of biological role, the nitrate reductase enzyme complex allows Bradyrhizobium sp. USDA 3045 to use nitrate as an electron acceptor during anaerobic growth. The beta chain is an electron transfer unit containing four cysteine clusters involved in the formation of iron-sulfur centers. Electrons are transferred from the gamma chain to the molybdenum cofactor of the alpha subunit. The polypeptide is Respiratory nitrate reductase beta chain (narH) (Bradyrhizobium sp).